A 121-amino-acid polypeptide reads, in one-letter code: Protein FAM241B (121 aa).

Residues 12-58 (QDDDPRVRTTTQPPRGSIPRQSFFNRGHGAPPGGPGPRQQQAGARLG) are disordered. The span at 19–35 (RTTTQPPRGSIPRQSFF) shows a compositional bias: polar residues. Ser-33 carries the post-translational modification Phosphoserine. Residues 48 to 58 (PRQQQAGARLG) show a composition bias toward low complexity. Ser-62 carries the post-translational modification Phosphoserine. Residues 92–112 (ILLLFLLMMLGVRGLLLVGLV) traverse the membrane as a helical segment.

Belongs to the FAM241 family.

It is found in the membrane. Functionally, may play a role in lysosome homeostasis. The sequence is that of Protein FAM241B from Homo sapiens (Human).